We begin with the raw amino-acid sequence, 432 residues long: Cyclic 2,3-diphosphoglycerate synthetase (432 aa).

Belongs to the cyclic 2,3-diphosphoglycerate synthetase family.

The protein resides in the cytoplasm. It carries out the reaction (2R)-2,3-bisphosphoglycerate + ATP + H(+) = cyclic (2R)-2,3-bisphosphoglycerate + ADP + phosphate. Catalyzes the formation of cyclic 2,3-diphosphoglycerate (cDPG) by formation of an intramolecular phosphoanhydride bond at the expense of ATP. This Thermococcus kodakarensis (strain ATCC BAA-918 / JCM 12380 / KOD1) (Pyrococcus kodakaraensis (strain KOD1)) protein is Cyclic 2,3-diphosphoglycerate synthetase.